The primary structure comprises 307 residues: Methionyl-tRNA formyltransferase (307 aa).

108–111 (SLLP) is a binding site for (6S)-5,6,7,8-tetrahydrofolate.

It belongs to the Fmt family.

It carries out the reaction L-methionyl-tRNA(fMet) + (6R)-10-formyltetrahydrofolate = N-formyl-L-methionyl-tRNA(fMet) + (6S)-5,6,7,8-tetrahydrofolate + H(+). In terms of biological role, attaches a formyl group to the free amino group of methionyl-tRNA(fMet). The formyl group appears to play a dual role in the initiator identity of N-formylmethionyl-tRNA by promoting its recognition by IF2 and preventing the misappropriation of this tRNA by the elongation apparatus. This is Methionyl-tRNA formyltransferase from Xanthomonas axonopodis pv. citri (strain 306).